Here is a 4561-residue protein sequence, read N- to C-terminus: StAR-related lipid transfer protein 9 (4561 aa).

Residues 3–384 (NVQVAVRVRP…MRYASNAKNI (382 aa)) enclose the Kinesin motor domain. Residue 103–110 (GQTGSGKT) coordinates ATP. Residues 307–321 (SSGGDSGVPSTTSGA) are compositionally biased toward low complexity. A disordered region spans residues 307–330 (SSGGDSGVPSTTSGASSGGGPARR). Residues 482-533 (TKIGRIDSDQEQDIVLQGQWIERDHCTITSTCGVVILRPTQGARCTVNGREV) form the FHA domain. 3 disordered regions span residues 784–805 (SRAP…RRSR), 873–1064 (SRWR…DTES), and 1092–1153 (WNLP…PSDS). 4 stretches are compositionally biased toward polar residues: residues 789-805 (WASS…RRSR), 884-903 (ASTQ…SQEI), 911-920 (CQMSSQGQST), and 939-948 (RWASVNTKTG). 2 stretches are compositionally biased toward basic and acidic residues: residues 1046–1060 (RPIK…RDLS) and 1124–1135 (SRGEYSMKDHGH). Ser-1164 is modified (phosphoserine). Disordered regions lie at residues 1288 to 1392 (PSGD…SDMS), 1700 to 1767 (REAW…EEEN), 1959 to 1980 (ECKA…EEKQ), 2077 to 2120 (TNAT…ADRL), 2320 to 2356 (LATG…LGGS), 2384 to 2427 (VSTS…SSLD), 2439 to 2467 (FLLQ…LPNS), 2622 to 2656 (KPRQ…DPLP), 2712 to 2735 (KDSI…SEKI), 2777 to 2800 (TGLE…GNVG), 3002 to 3067 (RSVE…PGTL), 3185 to 3207 (AQTE…REQL), 3246 to 3286 (ELNL…TSLK), 3645 to 3703 (EGAA…LRPE), 3790 to 3847 (SDLA…PQQS), and 3863 to 3913 (QPKT…GRTT). The segment covering 1300 to 1321 (DIHEIQPHDEKPKHWLSIEEPK) has biased composition (basic and acidic residues). 2 stretches are compositionally biased toward polar residues: residues 1328–1360 (LPQS…SQGL) and 1722–1741 (PKLS…TTTK). Composition is skewed to basic and acidic residues over residues 1754–1767 (ELGK…EEEN) and 1970–1980 (QSKEEPLEEKQ). The segment covering 2077-2091 (TNATSNNNTQIQKLT) has biased composition (polar residues). Positions 2096–2110 (RSREYVQTRESESEH) are enriched in basic and acidic residues. 2 stretches are compositionally biased toward polar residues: residues 2333 to 2351 (TRSS…TTHT) and 2399 to 2408 (TSTGSTTQEA). Positions 2414–2463 (EATVQKERKNSSLDRISRQAEKRVSFLLQEDSNQGEEERQKAEETSEDQQ) form a coiled coil. Positions 2417-2427 (VQKERKNSSLD) are enriched in basic and acidic residues. Residues 2634 to 2647 (DSSEVIEKRKEASR) are compositionally biased toward basic and acidic residues. Composition is skewed to polar residues over residues 3039–3054 (LKNN…SQTM) and 3187–3199 (TEPS…THSQ). Over residues 3689 to 3700 (PASPDGSPPPSL) the composition is skewed to pro residues. Basic and acidic residues predominate over residues 3812–3835 (DSQRAESLDREGKSPLGKSSERLL). Residues 3863-3874 (QPKTTTGDQSKL) show a composition bias toward polar residues. Positions 4185–4224 (SDIELMLQEYRRAREEAKVEIAQARDRLKERTEQEKMRIR) form a coiled coil. The START domain occupies 4344 to 4561 (PYQDLAKHIV…VAKLASFLRS (218 aa)).

The protein belongs to the TRAFAC class myosin-kinesin ATPase superfamily. Kinesin family. In terms of assembly, interacts with ATAD3A.

It is found in the cytoplasm. It localises to the cytoskeleton. Its subcellular location is the microtubule organizing center. The protein localises to the centrosome. The protein resides in the centriole. It is found in the nucleus. Microtubule-dependent motor protein required for spindle pole assembly during mitosis. Required to stabilize the pericentriolar material (PCM). In Mus musculus (Mouse), this protein is StAR-related lipid transfer protein 9 (Stard9).